An 842-amino-acid chain; its full sequence is Translation initiation factor IF-2 (842 aa).

Positions 94-259 (QRSPEEIQAE…HGFQNPTGPV (166 aa)) are disordered. Positions 96-138 (SPEEIQAEQKRELDERRAAENAARDKVEAEVRQRNEEQARRQA) are enriched in basic and acidic residues. Residues 139–148 (ADSAVAAPAP) show a composition bias toward low complexity. Pro residues predominate over residues 149–159 (AAKPEPAPAAA). Over residues 160–172 (PAPVVADAPASED) the composition is skewed to low complexity. 2 stretches are compositionally biased toward basic and acidic residues: residues 173–202 (AAAR…RGEA) and 226–235 (TTDEESDGAR). Residues 236–249 (RGRGGKGKLKKRNQ) show a composition bias toward basic residues. The tr-type G domain occupies 342 to 509 (SRAPVVTVMG…AVLLQAEILE (168 aa)). The G1 stretch occupies residues 351–358 (GHVDHGKT). 351-358 (GHVDHGKT) provides a ligand contact to GTP. The G2 stretch occupies residues 376-380 (GITQH). The segment at 397–400 (DTPG) is G3. Residues 397–401 (DTPGH) and 451–454 (NKID) contribute to the GTP site. The G4 stretch occupies residues 451–454 (NKID). The segment at 487–489 (SAK) is G5.

Belongs to the TRAFAC class translation factor GTPase superfamily. Classic translation factor GTPase family. IF-2 subfamily.

The protein resides in the cytoplasm. Functionally, one of the essential components for the initiation of protein synthesis. Protects formylmethionyl-tRNA from spontaneous hydrolysis and promotes its binding to the 30S ribosomal subunits. Also involved in the hydrolysis of GTP during the formation of the 70S ribosomal complex. This chain is Translation initiation factor IF-2, found in Pseudomonas putida (strain GB-1).